We begin with the raw amino-acid sequence, 300 residues long: Ribosomal protein L11 methyltransferase (300 aa).

S-adenosyl-L-methionine-binding residues include Thr-152, Gly-173, Asp-195, and Asn-234.

The protein belongs to the methyltransferase superfamily. PrmA family.

The protein resides in the cytoplasm. It catalyses the reaction L-lysyl-[protein] + 3 S-adenosyl-L-methionine = N(6),N(6),N(6)-trimethyl-L-lysyl-[protein] + 3 S-adenosyl-L-homocysteine + 3 H(+). Methylates ribosomal protein L11. The sequence is that of Ribosomal protein L11 methyltransferase from Paraburkholderia xenovorans (strain LB400).